A 330-amino-acid chain; its full sequence is Glycoprotein integral membrane protein 1 (330 aa).

An N-terminal signal peptide occupies residues 1–23 (MEGAPLGPLALRLLLFVALPASG). Topologically, residues 24 to 268 (WLTTGAPEPP…VFPVFFQFLN (245 aa)) are extracellular. N-linked (GlcNAc...) asparagine glycans are attached at residues Asn-46, Asn-64, Asn-166, and Asn-191. A helical transmembrane segment spans residues 269–289 (IMVVGITGAAVVITILKVLFP). The Cytoplasmic segment spans residues 290–330 (VSEYKGILQLDKVDVIPVTAINLYPDGPEKTAENLEDKTCI).

It is found in the membrane. The polypeptide is Glycoprotein integral membrane protein 1 (GINM1) (Pongo abelii (Sumatran orangutan)).